The primary structure comprises 802 residues: Leucine--tRNA ligase (802 aa).

A 'HIGH' region motif is present at residues 40–51 (PYPSGAGLHVGH). The 'KMSKS' region signature appears at 576–580 (KMSKS). Residue Lys-579 coordinates ATP.

The protein belongs to the class-I aminoacyl-tRNA synthetase family.

The protein localises to the cytoplasm. It carries out the reaction tRNA(Leu) + L-leucine + ATP = L-leucyl-tRNA(Leu) + AMP + diphosphate. This is Leucine--tRNA ligase from Bacillus cereus (strain B4264).